The primary structure comprises 929 residues: LPS-assembly protein LptD (929 aa).

The first 33 residues, 1-33 (MAVKSLVFRRKFPLLVTGSLLALQPVAALTVQA), serve as a signal peptide directing secretion. The tract at residues 58-101 (NLPPRPAHTATSVSTAAAGSSVSGSGGETVEAEPTQRLVTESGG) is disordered. Positions 66–90 (TATSVSTAAAGSSVSGSGGETVEAE) are enriched in low complexity.

This sequence belongs to the LptD family. Component of the lipopolysaccharide transport and assembly complex. Interacts with LptE and LptA.

It localises to the cell outer membrane. Functionally, together with LptE, is involved in the assembly of lipopolysaccharide (LPS) at the surface of the outer membrane. This chain is LPS-assembly protein LptD, found in Pseudomonas aeruginosa (strain LESB58).